Consider the following 356-residue polypeptide: Phospho-N-acetylmuramoyl-pentapeptide-transferase (356 aa).

The next 9 membrane-spanning stretches (helical) occupy residues 27-47 (AAAI…IGWM), 74-94 (MGGL…MDFA), 97-117 (YVWA…IDDY), 128-148 (VSGK…CYLI), 164-184 (PVID…VGTA), 201-221 (VIIA…AVFA), 241-261 (AIIG…AIFM), 284-304 (IVLG…IIQV), and 333-353 (TVVI…LATL).

This sequence belongs to the glycosyltransferase 4 family. MraY subfamily. It depends on Mg(2+) as a cofactor.

The protein resides in the cell inner membrane. The enzyme catalyses UDP-N-acetyl-alpha-D-muramoyl-L-alanyl-gamma-D-glutamyl-meso-2,6-diaminopimeloyl-D-alanyl-D-alanine + di-trans,octa-cis-undecaprenyl phosphate = di-trans,octa-cis-undecaprenyl diphospho-N-acetyl-alpha-D-muramoyl-L-alanyl-D-glutamyl-meso-2,6-diaminopimeloyl-D-alanyl-D-alanine + UMP. Its pathway is cell wall biogenesis; peptidoglycan biosynthesis. In terms of biological role, catalyzes the initial step of the lipid cycle reactions in the biosynthesis of the cell wall peptidoglycan: transfers peptidoglycan precursor phospho-MurNAc-pentapeptide from UDP-MurNAc-pentapeptide onto the lipid carrier undecaprenyl phosphate, yielding undecaprenyl-pyrophosphoryl-MurNAc-pentapeptide, known as lipid I. This is Phospho-N-acetylmuramoyl-pentapeptide-transferase from Zymomonas mobilis subsp. mobilis (strain ATCC 31821 / ZM4 / CP4).